The chain runs to 1032 residues: Putative oxidoreductase YgfK (1032 aa).

A 4Fe-4S ferredoxin-type domain is found at 928-958; the sequence is RFQTLHLDAYCNECGNCAQFCPWNGKPYKDK. The [4Fe-4S] cluster site is built by cysteine 938, cysteine 941, cysteine 944, and cysteine 948.

[4Fe-4S] cluster is required as a cofactor.

Its function is as follows. Could be an iron-sulfur flavoprotein with NADPH:O(2) oxidoreductase activity. The chain is Putative oxidoreductase YgfK (ygfK) from Escherichia coli O157:H7.